Consider the following 331-residue polypeptide: Tyrosine--tRNA ligase (331 aa).

Tyr-31, Tyr-155, Gln-159, Asp-162, and Gln-177 together coordinate L-tyrosine. The 'KMSKS' region signature appears at 218–222 (KMSKS). Lys-221 is a binding site for ATP.

Belongs to the class-I aminoacyl-tRNA synthetase family. TyrS type 4 subfamily. Homodimer.

The protein localises to the cytoplasm. It carries out the reaction tRNA(Tyr) + L-tyrosine + ATP = L-tyrosyl-tRNA(Tyr) + AMP + diphosphate + H(+). Catalyzes the attachment of tyrosine to tRNA(Tyr) in a two-step reaction: tyrosine is first activated by ATP to form Tyr-AMP and then transferred to the acceptor end of tRNA(Tyr). The sequence is that of Tyrosine--tRNA ligase from Thermoplasma volcanium (strain ATCC 51530 / DSM 4299 / JCM 9571 / NBRC 15438 / GSS1).